The following is a 159-amino-acid chain: Ribosomal RNA large subunit methyltransferase H (159 aa).

S-adenosyl-L-methionine-binding positions include Gly-108 and 127–132; that span reads FGKLTM.

The protein belongs to the RNA methyltransferase RlmH family. Homodimer.

The protein localises to the cytoplasm. It catalyses the reaction pseudouridine(1915) in 23S rRNA + S-adenosyl-L-methionine = N(3)-methylpseudouridine(1915) in 23S rRNA + S-adenosyl-L-homocysteine + H(+). Its function is as follows. Specifically methylates the pseudouridine at position 1915 (m3Psi1915) in 23S rRNA. This Lactobacillus acidophilus (strain ATCC 700396 / NCK56 / N2 / NCFM) protein is Ribosomal RNA large subunit methyltransferase H.